A 92-amino-acid chain; its full sequence is Toxin RelE3 (92 aa).

This sequence belongs to the RelE toxin family.

In terms of biological role, toxic component of a type II toxin-antitoxin (TA) system. Its toxic effect is neutralized by coexpression with cognate antitoxin RelB3 but no other ParD or RelB antitoxin. This chain is Toxin RelE3 (relE3), found in Caulobacter vibrioides (strain ATCC 19089 / CIP 103742 / CB 15) (Caulobacter crescentus).